A 359-amino-acid polypeptide reads, in one-letter code: Serpentine receptor class epsilon-26 (359 aa).

7 helical membrane-spanning segments follow: residues 29 to 49 (CAIS…VFVS), 66 to 86 (IGVP…ITIL), 127 to 147 (VAGF…LAIV), 172 to 192 (FIII…FNIL), 195 to 215 (YVLN…YYYI), 256 to 276 (LVFV…ALVL), and 282 to 302 (FFMH…FLVV).

Belongs to the nematode receptor-like protein sre family.

It is found in the membrane. The polypeptide is Serpentine receptor class epsilon-26 (sre-26) (Caenorhabditis elegans).